We begin with the raw amino-acid sequence, 217 residues long: Probable transaldolase (217 aa).

The Schiff-base intermediate with substrate role is filled by K83.

This sequence belongs to the transaldolase family. Type 3B subfamily.

It is found in the cytoplasm. It catalyses the reaction D-sedoheptulose 7-phosphate + D-glyceraldehyde 3-phosphate = D-erythrose 4-phosphate + beta-D-fructose 6-phosphate. It participates in carbohydrate degradation; pentose phosphate pathway; D-glyceraldehyde 3-phosphate and beta-D-fructose 6-phosphate from D-ribose 5-phosphate and D-xylulose 5-phosphate (non-oxidative stage): step 2/3. Transaldolase is important for the balance of metabolites in the pentose-phosphate pathway. In Jannaschia sp. (strain CCS1), this protein is Probable transaldolase.